The primary structure comprises 273 residues: MSLQQTIEQAFENRNEYSPATMPQDVRDAINQVLEQLDNGTLRVAEKKDGEWVVNQWAKKAVLLSFRLNDNYVQAAGEHVQFYDKVPTKFANWTEAQFKEAGVRVVPPAVARKGSYIAPGAVLMPSYVNIGAYVDQGAMVDTWATVGSCAQIGKNVHLSGGVGIGGVLEPLQANPTIIEDNCFIGARSEIVEGVIVEEGAVISMGVYIGQSTRIYDRETGEIHRGRVPAGSVVVPGSLPSEDGTHSLYAAIIVKKVDAQTRAKTSVNELLRLA.

Substrate-binding residues include Arg104 and Asp141.

The protein belongs to the transferase hexapeptide repeat family. As to quaternary structure, homotrimer.

Its subcellular location is the cytoplasm. It catalyses the reaction (S)-2,3,4,5-tetrahydrodipicolinate + succinyl-CoA + H2O = (S)-2-succinylamino-6-oxoheptanedioate + CoA. The protein operates within amino-acid biosynthesis; L-lysine biosynthesis via DAP pathway; LL-2,6-diaminopimelate from (S)-tetrahydrodipicolinate (succinylase route): step 1/3. In Psychrobacter cryohalolentis (strain ATCC BAA-1226 / DSM 17306 / VKM B-2378 / K5), this protein is 2,3,4,5-tetrahydropyridine-2,6-dicarboxylate N-succinyltransferase.